The primary structure comprises 362 residues: METTVRKQKKNLETKKPSIYSLQLHEMQDWLKEQGEPKFRAGQIFDWLYKKRVKNYEDMSNLSKGLREKLSNSFDITTLNTLVKQTSSDGTIKFLFQLYDGYSIETVLMRHEYGNSICVTTQVGCRIGCTFCASTLGGLKRNLEAGEIVAQVVEVQRALDESEERVSSLVVMGIGEPFDNYDNLMGFLRIINHEKGLHIGARHMTVSTSGIIPKIYKFAEEDLQINFAISLHAPNSELRSKLMPINRAYKLPDLMEAIKYYVNRTGRRITFEYGLFGGENDQVEHAEELAALLKGVKCHVNLIPVNYVPERDYVRTPREQIFLFEKTLKDRGVNVTIRREQGHDIDAACGQLRAKERKEETR.

The Proton acceptor role is filled by E105. One can recognise a Radical SAM core domain in the interval 111–344 (HEYGNSICVT…VTIRREQGHD (234 aa)). A disulfide bond links C118 and C349. [4Fe-4S] cluster-binding residues include C125, C129, and C132. S-adenosyl-L-methionine contacts are provided by residues 175–176 (GE), S207, 230–232 (SLH), and N306. The active-site S-methylcysteine intermediate is the C349.

This sequence belongs to the radical SAM superfamily. RlmN family. The cofactor is [4Fe-4S] cluster.

It is found in the cytoplasm. It carries out the reaction adenosine(2503) in 23S rRNA + 2 reduced [2Fe-2S]-[ferredoxin] + 2 S-adenosyl-L-methionine = 2-methyladenosine(2503) in 23S rRNA + 5'-deoxyadenosine + L-methionine + 2 oxidized [2Fe-2S]-[ferredoxin] + S-adenosyl-L-homocysteine. The catalysed reaction is adenosine(37) in tRNA + 2 reduced [2Fe-2S]-[ferredoxin] + 2 S-adenosyl-L-methionine = 2-methyladenosine(37) in tRNA + 5'-deoxyadenosine + L-methionine + 2 oxidized [2Fe-2S]-[ferredoxin] + S-adenosyl-L-homocysteine. Functionally, specifically methylates position 2 of adenine 2503 in 23S rRNA and position 2 of adenine 37 in tRNAs. The chain is Probable dual-specificity RNA methyltransferase RlmN from Bacillus anthracis (strain A0248).